The chain runs to 700 residues: Long-chain-fatty-acid--CoA ligase 1 (700 aa).

Residues 1–21 (MVAQYTVPVGKAANEHETAPR) are disordered. K189 participates in a covalent cross-link: Glycyl lysine isopeptide (Lys-Gly) (interchain with G-Cter in ubiquitin). 269 to 280 (YTSGSTGEPKGV) serves as a coordination point for ATP. The FACS signature appears at 531–580 (DGWFKTGDIGEWEANGHLKIIDRKKNLVKTMNGEYIALEKLESVYRSNEY).

Belongs to the ATP-dependent AMP-binding enzyme family. As to quaternary structure, interacts with FAT1. It depends on Mg(2+) as a cofactor.

The protein localises to the lipid droplet. Its subcellular location is the cell membrane. The enzyme catalyses a long-chain fatty acid + ATP + CoA = a long-chain fatty acyl-CoA + AMP + diphosphate. It carries out the reaction (9Z)-octadecenoate + ATP + CoA = (9Z)-octadecenoyl-CoA + AMP + diphosphate. It catalyses the reaction hexadecanoate + ATP + CoA = hexadecanoyl-CoA + AMP + diphosphate. The catalysed reaction is (9Z)-hexadecenoate + ATP + CoA = (9Z)-hexadecenoyl-CoA + AMP + diphosphate. The enzyme catalyses tetradecanoate + ATP + CoA = tetradecanoyl-CoA + AMP + diphosphate. It carries out the reaction (9Z)-tetradecenoate + ATP + CoA = (9Z)-tetradecenoyl-CoA + AMP + diphosphate. It catalyses the reaction (9Z,12Z)-octadecadienoate + ATP + CoA = (9Z,12Z)-octadecadienoyl-CoA + AMP + diphosphate. The catalysed reaction is dodecanoate + ATP + CoA = dodecanoyl-CoA + AMP + diphosphate. The enzyme catalyses pentadecanoate + ATP + CoA = pentadecanoyl-CoA + AMP + diphosphate. It carries out the reaction undecanoate + ATP + CoA = undecanoyl-CoA + AMP + diphosphate. It catalyses the reaction heptadecanoate + ATP + CoA = heptadecanoyl-CoA + AMP + diphosphate. The catalysed reaction is octadecanoate + ATP + CoA = octadecanoyl-CoA + AMP + diphosphate. Activates long-chain fatty acids (LCFA) by esterification of the fatty acids into metabolically active CoA-thioesters for subsequent degradation or incorporation into phospholipids. Also facilitates the transport of LCFAs into the cell, either by active transport or by decreasing the intracellular LCFA concentration. It may supplement intracellular myristoyl-CoA pools from exogenous myristate. Preferentially acts on C12:0-C16:0 fatty acids with myristic and pentadecanic acid (C15:0) having the highest activities. Also involved in long-chain base (LCB) uptake of sphingolipids. In contrast ot LCFA uptake, LCB uptake does not require ATP, suggesting that the enzyme is directly involved in active LCB uptake. Involved in the sphingolipid-to-glycerolipid metabolic pathway, converting the sphingolipid metabolite hexadecenoic acid to hexadecenoyl-CoA, which is then further converted to glycerolipids. The polypeptide is Long-chain-fatty-acid--CoA ligase 1 (FAA1) (Saccharomyces cerevisiae (strain ATCC 204508 / S288c) (Baker's yeast)).